Consider the following 315-residue polypeptide: Methionyl-tRNA formyltransferase (315 aa).

Residue 113–116 participates in (6S)-5,6,7,8-tetrahydrofolate binding; sequence SLLP.

The protein belongs to the Fmt family.

The enzyme catalyses L-methionyl-tRNA(fMet) + (6R)-10-formyltetrahydrofolate = N-formyl-L-methionyl-tRNA(fMet) + (6S)-5,6,7,8-tetrahydrofolate + H(+). Its function is as follows. Attaches a formyl group to the free amino group of methionyl-tRNA(fMet). The formyl group appears to play a dual role in the initiator identity of N-formylmethionyl-tRNA by promoting its recognition by IF2 and preventing the misappropriation of this tRNA by the elongation apparatus. In Pectobacterium atrosepticum (strain SCRI 1043 / ATCC BAA-672) (Erwinia carotovora subsp. atroseptica), this protein is Methionyl-tRNA formyltransferase.